Here is a 91-residue protein sequence, read N- to C-terminus: DNA-binding protein HU (91 aa).

This sequence belongs to the bacterial histone-like protein family.

Functionally, histone-like DNA-binding protein which is capable of wrapping DNA to stabilize it, and thus to prevent its denaturation under extreme environmental conditions. In Clostridium pasteurianum, this protein is DNA-binding protein HU (hup).